The chain runs to 347 residues: Major capsid protein (347 aa).

The protein belongs to the baculoviridae major capsid protein family.

It localises to the virion. Functionally, most abundant structural protein of the nucleocapsid produced during the infection cycle. The monomers are arranged in stacked rings around the nucleoprotein core. This is Major capsid protein (P39) from Autographa californica nuclear polyhedrosis virus (AcMNPV).